The primary structure comprises 83 residues: Small ribosomal subunit protein uS17 (83 aa).

It belongs to the universal ribosomal protein uS17 family. In terms of assembly, part of the 30S ribosomal subunit.

Functionally, one of the primary rRNA binding proteins, it binds specifically to the 5'-end of 16S ribosomal RNA. The sequence is that of Small ribosomal subunit protein uS17 from Thermodesulfovibrio yellowstonii (strain ATCC 51303 / DSM 11347 / YP87).